The sequence spans 240 residues: tRNA1(Val) (adenine(37)-N6)-methyltransferase (240 aa).

This sequence belongs to the methyltransferase superfamily. tRNA (adenine-N(6)-)-methyltransferase family.

It is found in the cytoplasm. It carries out the reaction adenosine(37) in tRNA1(Val) + S-adenosyl-L-methionine = N(6)-methyladenosine(37) in tRNA1(Val) + S-adenosyl-L-homocysteine + H(+). In terms of biological role, specifically methylates the adenine in position 37 of tRNA(1)(Val) (anticodon cmo5UAC). The chain is tRNA1(Val) (adenine(37)-N6)-methyltransferase from Photobacterium profundum (strain SS9).